The chain runs to 213 residues: Cytochrome b6 (213 aa).

A helical membrane pass occupies residues 30-50 (IFYCLGGLTLLAFLVQCVTGL). C33 is a binding site for heme c. Heme b contacts are provided by H84 and H98. Helical transmembrane passes span 88-108 (ANLM…TGSF), 114-134 (LNWL…FTGY), and 184-204 (LHVM…FIMI). H185 and H200 together coordinate heme b.

Belongs to the cytochrome b family. PetB subfamily. As to quaternary structure, the subunits of the cytochrome bc complex are a Rieske Fe-S protein (PetC), cytochrome b6 (PetB), subunit IV (PetD), and a diheme cytochrome c (PetX). The cofactor is heme b. It depends on heme c as a cofactor.

Its subcellular location is the cell membrane. In terms of biological role, component of the cytochrome bc complex which donates electrons to the photosynthetic reaction center. This is Cytochrome b6 from Heliobacterium mobile (Heliobacillus mobilis).